The primary structure comprises 189 residues: MEILTTTFLSLGLAADAFAVSLTSGFSIKHIKLNKALKIALFFGCFQAIMPFIGWSAGLTFRDFISSFDHWIAFGLLSYIGGKMIYESMEEEKEDKKFNPLDSYTLTTLAIATSIDALAAGIGLSVLKGSILLACTLIGFITFGLCFIGVFIGHRFGDILNQKIEIVGGVVLILIGTKILLEHLGFSLV.

Transmembrane regions (helical) follow at residues 8-28 (FLSL…GFSI), 39-59 (IALF…SAGL), 65-85 (ISSF…GKMI), 106-126 (LTTL…GLSV), 131-151 (ILLA…IGVF), and 166-186 (IVGG…HLGF).

Belongs to the MntP (TC 9.B.29) family.

It is found in the cell inner membrane. Its function is as follows. Probably functions as a manganese efflux pump. In Gloeothece citriformis (strain PCC 7424) (Cyanothece sp. (strain PCC 7424)), this protein is Putative manganese efflux pump MntP.